Consider the following 340-residue polypeptide: MALPIYYDKDCDINLIKSKKVAIIGFGSQGHAHAENLRDSGVEVKIGLYPGGRSWKKAEAKGFDVLEVADASEWADVVMILIPDEIQSEVYYRDIEPNLKESDTIAFGHGFNIHYGRIKPRADINVMMVAPKAPGHTVRSEFVKGGGIPDLIAVAQDPSGNTLELAKSYASAIGGGRTGIIHTTFKDETETDLFGEQAVLCGGVSALIQAGFETLTEAGYPEEMAYFECLHELKLIVDLIYEGGLANMRYSISNTAEYGDYVSGPRVINEASRQAMKDILKEIQNGKFAKDFILEGMAGYPRMTAERRNCEAHPIEQVGKRLRAMMPWITANKIVDQEKN.

The KARI N-terminal Rossmann domain occupies 3–183 (LPIYYDKDCD…GGGRTGIIHT (181 aa)). NADP(+)-binding positions include 26–29 (FGSQ), S54, and 84–87 (DEIQ). H109 is an active-site residue. G135 is an NADP(+) binding site. The 146-residue stretch at 184 to 329 (TFKDETETDL…KRLRAMMPWI (146 aa)) folds into the KARI C-terminal knotted domain. Mg(2+)-binding residues include D192, E196, E228, and E232. Position 253 (S253) interacts with substrate.

It belongs to the ketol-acid reductoisomerase family. It depends on Mg(2+) as a cofactor.

The enzyme catalyses (2R)-2,3-dihydroxy-3-methylbutanoate + NADP(+) = (2S)-2-acetolactate + NADPH + H(+). The catalysed reaction is (2R,3R)-2,3-dihydroxy-3-methylpentanoate + NADP(+) = (S)-2-ethyl-2-hydroxy-3-oxobutanoate + NADPH + H(+). It participates in amino-acid biosynthesis; L-isoleucine biosynthesis; L-isoleucine from 2-oxobutanoate: step 2/4. The protein operates within amino-acid biosynthesis; L-valine biosynthesis; L-valine from pyruvate: step 2/4. In terms of biological role, involved in the biosynthesis of branched-chain amino acids (BCAA). Catalyzes an alkyl-migration followed by a ketol-acid reduction of (S)-2-acetolactate (S2AL) to yield (R)-2,3-dihydroxy-isovalerate. In the isomerase reaction, S2AL is rearranged via a Mg-dependent methyl migration to produce 3-hydroxy-3-methyl-2-ketobutyrate (HMKB). In the reductase reaction, this 2-ketoacid undergoes a metal-dependent reduction by NADPH to yield (R)-2,3-dihydroxy-isovalerate. This is Ketol-acid reductoisomerase (NADP(+)) from Nitratiruptor sp. (strain SB155-2).